The primary structure comprises 396 residues: 1-deoxy-D-xylulose 5-phosphate reductoisomerase (396 aa).

NADPH-binding residues include threonine 15, glycine 16, serine 17, isoleucine 18, glycine 41, and asparagine 130. Lysine 131 contacts 1-deoxy-D-xylulose 5-phosphate. Glutamate 132 is an NADPH binding site. Aspartate 155 is a binding site for Mn(2+). 1-deoxy-D-xylulose 5-phosphate contacts are provided by serine 156, glutamate 157, serine 181, and histidine 204. Glutamate 157 serves as a coordination point for Mn(2+). Glycine 210 contacts NADPH. Serine 217, asparagine 222, lysine 223, and glutamate 226 together coordinate 1-deoxy-D-xylulose 5-phosphate. Glutamate 226 is a Mn(2+) binding site.

Belongs to the DXR family. Requires Mg(2+) as cofactor. Mn(2+) serves as cofactor.

It catalyses the reaction 2-C-methyl-D-erythritol 4-phosphate + NADP(+) = 1-deoxy-D-xylulose 5-phosphate + NADPH + H(+). The protein operates within isoprenoid biosynthesis; isopentenyl diphosphate biosynthesis via DXP pathway; isopentenyl diphosphate from 1-deoxy-D-xylulose 5-phosphate: step 1/6. Functionally, catalyzes the NADPH-dependent rearrangement and reduction of 1-deoxy-D-xylulose-5-phosphate (DXP) to 2-C-methyl-D-erythritol 4-phosphate (MEP). The sequence is that of 1-deoxy-D-xylulose 5-phosphate reductoisomerase from Bifidobacterium longum (strain DJO10A).